The following is a 441-amino-acid chain: Methionine gamma-lyase (441 aa).

Residues 1-25 (MAHFLETQEPLVFSGKKRNDRDDED) are disordered. At K248 the chain carries N6-(pyridoxal phosphate)lysine.

This sequence belongs to the trans-sulfuration enzymes family. As to quaternary structure, homotetramer. Pyridoxal 5'-phosphate serves as cofactor. Expressed in roots, stems, siliques, leaves, flowers and seeds after imbibition (at protein level). Transcripts accumulate in dry mature seeds, but at protein level, only present upon imbibition.

The protein localises to the cytoplasm. The enzyme catalyses L-methionine + H2O = methanethiol + 2-oxobutanoate + NH4(+). Functionally, catalyzes the degradation of L-methionine to alpha-ketobutyrate, methanethiol and ammonia. Exhibits a high activity toward L-methionine, L-ethionine, L-homocysteine and seleno-L-methionine, but not L-cysteine. Involved in an alternative cysteine biosynthesis pathway to the reverse trans-sulfuration pathway (methionine-&gt;homocysteine-&gt;cystathionine-&gt;cysteine) in which methanethiol is an intermediate. Also mediates an alternative isoleucine biosynthesis pathway in which 2-ketobutyrate is an intermediate. This Arabidopsis thaliana (Mouse-ear cress) protein is Methionine gamma-lyase (MGL).